We begin with the raw amino-acid sequence, 2006 residues long: E3 ubiquitin-protein ligase PRT6 (2006 aa).

A UBR-type zinc finger spans residues 119-189 (GVCGSVWGQN…PDGFCSNHKG (71 aa)). Disordered regions lie at residues 1167–1186 (LSSS…SDSV) and 1338–1380 (DHQP…AGSD). Positions 1338-1348 (DHQPHEAENCS) are enriched in basic and acidic residues. The span at 1349–1360 (EKNSVGGPSTLQ) shows a compositional bias: polar residues. Residues 1364–1377 (PDIRSRQTSRRPDA) are compositionally biased toward basic and acidic residues. Residues 1395–1440 (CGHAVHQSCLERYLKSLKERSGRRTVFEGAHIVDLKKKEFLCPVCR) form an RING-type; degenerate zinc finger.

This sequence belongs to the E3 ubiquitin-protein ligase UBR1-like family.

The catalysed reaction is S-ubiquitinyl-[E2 ubiquitin-conjugating enzyme]-L-cysteine + [acceptor protein]-L-lysine = [E2 ubiquitin-conjugating enzyme]-L-cysteine + N(6)-ubiquitinyl-[acceptor protein]-L-lysine.. It participates in protein modification; protein ubiquitination. Ubiquitin protein ligase which is a component of the N-end rule pathway with arginine specificity, and functions with the arginyltransferases ATE1 and ATE2. Recognizes and binds to proteins bearing specific N-terminal residues that are destabilizing according to the N-end rule, leading to their ubiquitination and subsequent degradation. Does not participate in degradation of proteins with N-terminal Phe or Leu. The N-end rule pathway regulates seed after-ripening, seedling sugar sensitivity, seedling lipid breakdown, and abscisic acid (ABA) sensitivity of germination. The N-end rule pathway regulates various aspects of leaf and shoot development. Involved in the ubiquitination and subsequent degradation of RAP2-12, an activator of hypoxic gene expression. The ubiquitination occurs after the N-arginylation of RAP2-12 by ATE1 or ATE2 under aerobic conditions. The end-rule pathway plays a role in regulating the timing and amplitude of the immune response following infection with the bacterial pathogen Pseudomonas syringae pv tomato. Regulates the biosynthesis of plant-defense metabolites such as glucosinolates, and the biosynthesis and response to the phytohormone jasmonate (JA), which plays a key role in plant immunity. Controls the expression of specific defense-response genes, activates the synthesis pathway for the phytoalexin camalexin, and influences basal resistance to the hemibiotroph pathogen Pseudomonas syringae pv tomato. Coordinates the mobilization of seed storage reserves and regulates the abundance and activities of several proteases following seed germination. This Arabidopsis thaliana (Mouse-ear cress) protein is E3 ubiquitin-protein ligase PRT6.